Here is a 622-residue protein sequence, read N- to C-terminus: TAF6-like RNA polymerase II p300/CBP-associated factor-associated factor 65 kDa subunit 6L (622 aa).

2 disordered regions span residues 403 to 430 (QESS…GPED) and 457 to 546 (GTGQ…TRDV). Residues Ser-495 and Ser-501 each carry the phosphoserine modification. Over residues 511-522 (ASASGPAASESR) the composition is skewed to low complexity. Asymmetric dimethylarginine occurs at positions 555, 561, and 593.

The protein belongs to the TAF6 family. As to quaternary structure, the PCAF complex is composed of a number of TBP-associated factors (TAFS), such as TAF5, TAF5L, TAF6, TAF6L, TAF9, TAF10 and TAF12, PCAF, and also PCAF-associated factors (PAFs), such as TADA2L/ADA2, TADA3L/ADA3 and SPT3. Component of the STAGA transcription coactivator-HAT complex, at least composed of SUPT3H, GCN5L2, TAF5L, TAF6L, SUPT7L, TADA3L, TAD1L, TAF10, TAF12, TRRAP and TAF9.

It localises to the nucleus. Its function is as follows. Functions as a component of the PCAF complex. The PCAF complex is capable of efficiently acetylating histones in a nucleosomal context. The PCAF complex could be considered as the human version of the yeast SAGA complex. With TAF5L, acts as an epigenetic regulator essential for somatic reprogramming. Regulates target genes through H3K9ac deposition and MYC recruitment which trigger MYC regulatory network to orchestrate gene expression programs to control embryonic stem cell state. Functions with MYC to activate target gene expression through RNA polymerase II pause release. The polypeptide is TAF6-like RNA polymerase II p300/CBP-associated factor-associated factor 65 kDa subunit 6L (Homo sapiens (Human)).